The primary structure comprises 1710 residues: Latrophilin Cirl (1710 aa).

At 1-767 (MLPTILSISY…LFTMFDGNMR (767 aa)) the chain is on the extracellular side. The 90-residue stretch at 25–114 (ACEGKKLTIE…KYLEAHYQCI (90 aa)) folds into the SUEL-type lectin domain. Residue N142 is glycosylated (N-linked (GlcNAc...) asparagine). Residues 183–304 (QHTAVTHSTP…SGSVVPGNGS (122 aa)) are disordered. 2 stretches are compositionally biased toward polar residues: residues 185–198 (TAVT…STTA) and 256–265 (NATSPSNTRI). Residue N256 is glycosylated (N-linked (GlcNAc...) asparagine). Composition is skewed to low complexity over residues 275–285 (DDGTLLTTKSS) and 295–304 (SGSVVPGNGS). N302 and N341 each carry an N-linked (GlcNAc...) asparagine glycan. The tract at residues 376–400 (YDEYDDDPSSTTPATSSADCLHNSS) is disordered. Over residues 384 to 394 (SSTTPATSSAD) the composition is skewed to low complexity. Residues N398, N655, N703, and N730 are each glycosylated (N-linked (GlcNAc...) asparagine). One can recognise a GAIN-B domain in the interval 561 to 754 (RSVVQKVKNI…AILMDVVDEH (194 aa)). 2 cysteine pairs are disulfide-bonded: C709-C736 and C724-C738. Positions 709-754 (CVFWNYIDHAWSANGCSLESTNRTHSVCSCNHLTNFAILMDVVDEH) are GPS. A helical transmembrane segment spans residues 768-788 (IFIYISIGICVVFIVIALLTL). Residues 789-801 (KLFNGVFVKSART) lie on the Cytoplasmic side of the membrane. Residues 802 to 822 (SIYTSIYLCLLAIELLFLLGI) form a helical membrane-spanning segment. Over 823 to 828 (EQTETS) the chain is Extracellular. The helical transmembrane segment at 829–849 (IFCGFITIFLHCAILSGTAWF) threads the bilayer. Topologically, residues 850 to 875 (CYEAFHSYSTLTSDELLLEVDQTPKV) are cytoplasmic. The helical transmembrane segment at 876-896 (NCYYLLSYGLSLSVVAISLVI) threads the bilayer. Residues 897–920 (DPSTYTQNDYCVLMEANALFYATF) lie on the Extracellular side of the membrane. A helical membrane pass occupies residues 921–941 (VMPVLVFFVAAIGYTFLSWII). The Cytoplasmic segment spans residues 942 to 968 (MCRKSRTGLKTKEHTRLASVRFDIRCS). A helical transmembrane segment spans residues 969-989 (FVFLLLLSAVWCSAYFYLRGA). The Extracellular segment spans residues 990-999 (KMDDDTADVY). A helical transmembrane segment spans residues 1000 to 1020 (GYCFICFNTLLGLYIFVFHCI). Over 1021 to 1710 (QNEKIRREYR…VRCYLEPLAK (690 aa)) the chain is Cytoplasmic. Phosphoserine is present on residues S1156, S1253, S1260, S1329, and S1330. The disordered stretch occupies residues 1234–1259 (KPNSGQHGKKKRGAGGVPASPSGSLH). 2 disordered regions span residues 1452–1540 (GGGS…SDER) and 1568–1690 (DYGA…QQRH). Residues 1458–1483 (GGSVSSRSQQQQLKKQQQQQSLAQQR) show a composition bias toward low complexity. Composition is skewed to acidic residues over residues 1491 to 1505 (DDDD…EEAT) and 1515 to 1528 (CDED…DLED). The span at 1638 to 1650 (QTPAQKRQQLQKL) shows a compositional bias: polar residues. Low complexity predominate over residues 1651–1672 (SPQSTTSSSSHTSHSNPNPHPH). The span at 1673 to 1689 (QLTHPHPHQHPPHHQQR) shows a compositional bias: basic residues.

Belongs to the G-protein coupled receptor 2 family. LN-TM7 subfamily. Forms a heterodimer, consisting of a large extracellular region non-covalently linked to a seven-transmembrane moiety. In terms of processing, proteolytically cleaved into 2 subunits, an extracellular subunit and a seven-transmembrane subunit.

The protein localises to the cell membrane. The sequence is that of Latrophilin Cirl from Drosophila erecta (Fruit fly).